We begin with the raw amino-acid sequence, 196 residues long: Large ribosomal subunit protein eL15 (196 aa).

The interval 162–196 (RGLTNAGRSNRGLQNRGKGAEHTRPSAGSGSRRGK) is disordered.

It belongs to the eukaryotic ribosomal protein eL15 family.

The chain is Large ribosomal subunit protein eL15 from Haloquadratum walsbyi (strain DSM 16790 / HBSQ001).